The primary structure comprises 377 residues: 3-dehydroquinate synthase (377 aa).

NAD(+)-binding positions include 115-119 (GVIGD), 139-140 (TS), K152, and K161. Residues E194, H256, and H275 each coordinate Zn(2+).

The protein belongs to the sugar phosphate cyclases superfamily. Dehydroquinate synthase family. Requires Co(2+) as cofactor. Zn(2+) is required as a cofactor. It depends on NAD(+) as a cofactor.

The protein localises to the cytoplasm. It carries out the reaction 7-phospho-2-dehydro-3-deoxy-D-arabino-heptonate = 3-dehydroquinate + phosphate. It functions in the pathway metabolic intermediate biosynthesis; chorismate biosynthesis; chorismate from D-erythrose 4-phosphate and phosphoenolpyruvate: step 2/7. Functionally, catalyzes the conversion of 3-deoxy-D-arabino-heptulosonate 7-phosphate (DAHP) to dehydroquinate (DHQ). The protein is 3-dehydroquinate synthase of Rhizobium rhizogenes (strain K84 / ATCC BAA-868) (Agrobacterium radiobacter).